Consider the following 304-residue polypeptide: MTTRTDAVKAYLLDLQDRICAALETEDGGTRFVEDAWTRPAGGGGRTRVIENGTVIEKGGVNFSHVFGSGLPPSASAHRPELAGRGFEALGVSLVIHPHNPHVPTSHANVRFFIAEKEGEEPVWWFGGGFDLTPYYGNEEDCIHWHRVAEKACAPFGPDVYPRYKAWCDTYFHIKHRHEPRGIGGLFFDDLNEWDFDTSFAFMRAIGDAYIDAYLPIVQRRKNDAFTARQREFQEFRRGRYVEFNLVYDRGTLFGLQSGGRTESILMSLPPQVRWAYDWKAEPGSEEARLTEYFLQDRDWLAQA.

Ser-93 contacts substrate. Positions 97 and 107 each coordinate a divalent metal cation. His-107 (proton donor) is an active-site residue. 109–111 provides a ligand contact to substrate; that stretch reads NVR. A divalent metal cation-binding residues include His-146 and His-176. The tract at residues 241–276 is important for dimerization; the sequence is YVEFNLVYDRGTLFGLQSGGRTESILMSLPPQVRWA. Position 259 to 261 (259 to 261) interacts with substrate; the sequence is GGR.

The protein belongs to the aerobic coproporphyrinogen-III oxidase family. As to quaternary structure, homodimer. Requires a divalent metal cation as cofactor.

It localises to the cytoplasm. The enzyme catalyses coproporphyrinogen III + O2 + 2 H(+) = protoporphyrinogen IX + 2 CO2 + 2 H2O. It participates in porphyrin-containing compound metabolism; protoporphyrin-IX biosynthesis; protoporphyrinogen-IX from coproporphyrinogen-III (O2 route): step 1/1. Its function is as follows. Involved in the heme biosynthesis. Catalyzes the aerobic oxidative decarboxylation of propionate groups of rings A and B of coproporphyrinogen-III to yield the vinyl groups in protoporphyrinogen-IX. The sequence is that of Oxygen-dependent coproporphyrinogen-III oxidase from Pseudomonas fluorescens (strain Pf0-1).